Here is a 199-residue protein sequence, read N- to C-terminus: Recombination protein RecR (199 aa).

The C4-type zinc finger occupies 58–73 (CSVCSNLTDIDPCPLC). In terms of domain architecture, Toprim spans 81 to 176 (TVICVVQDPR…KATRIAHGIP (96 aa)).

Belongs to the RecR family.

May play a role in DNA repair. It seems to be involved in an RecBC-independent recombinational process of DNA repair. It may act with RecF and RecO. The protein is Recombination protein RecR of Ruminiclostridium cellulolyticum (strain ATCC 35319 / DSM 5812 / JCM 6584 / H10) (Clostridium cellulolyticum).